A 224-amino-acid polypeptide reads, in one-letter code: MMTNLFSVFDPSAIFNLSLNWLSTFLGLLMIPSIYWLMPSRYNIFWNSILLTLHKEFKTLLGPSGHNGSTFIFISLFSLILFNNFMGLFPYIFTSTSHLTLTLSLALPLWLCFMLYGWINHTQHMFAHLVPQGTPAILMPFMVCIETISNIIRPGTLAVRLTANMIAGHLLLTLLGNTGPSMSYLLVTFLLVAQIALLVLESAVTMIQSYVFAVLSTLYSSEVN.

6 helical membrane-spanning segments follow: residues 17–37 (LSLN…IYWL), 72–92 (IFIS…FPYI), 99–119 (LTLT…YGWI), 125–145 (MFAH…MVCI), 155–175 (GTLA…LTLL), and 184–204 (YLLV…ESAV).

Belongs to the ATPase A chain family. As to quaternary structure, F-type ATPases have 2 components, CF(1) - the catalytic core - and CF(0) - the membrane proton channel. CF(1) has five subunits: alpha(3), beta(3), gamma(1), delta(1), epsilon(1). CF(0) has three main subunits: a, b and c.

It localises to the mitochondrion inner membrane. Mitochondrial membrane ATP synthase (F(1)F(0) ATP synthase or Complex V) produces ATP from ADP in the presence of a proton gradient across the membrane which is generated by electron transport complexes of the respiratory chain. F-type ATPases consist of two structural domains, F(1) - containing the extramembraneous catalytic core and F(0) - containing the membrane proton channel, linked together by a central stalk and a peripheral stalk. During catalysis, ATP synthesis in the catalytic domain of F(1) is coupled via a rotary mechanism of the central stalk subunits to proton translocation. Key component of the proton channel; it may play a direct role in the translocation of protons across the membrane. This is ATP synthase subunit a (mt:ATPase6) from Drosophila yakuba (Fruit fly).